Here is a 150-residue protein sequence, read N- to C-terminus: Troponin C, isoform 2B (150 aa).

Met1 is modified (N-acetylmethionine). 4 consecutive EF-hand domains span residues 7–42 (EQLS…MGVK), 43–78 (ISEK…FLIE), 83–118 (ALKA…LDNR), and 119–150 (LTEE…MMNG). Ca(2+) is bound by residues Asp56, Asp58, Ser60, Glu62, and Glu67. The Ca(2+) site is built by Asp132, Asp134, Ser136, Thr138, and Glu143.

It belongs to the troponin C family.

Its function is as follows. Troponin is the central regulatory protein of striated muscle contraction. Tn consists of three components: Tn-I which is the inhibitor of actomyosin ATPase, Tn-T which contains the binding site for tropomyosin and Tn-C. The binding of calcium to Tn-C abolishes the inhibitory action of Tn on actin filaments. This is Troponin C, isoform 2B from Homarus americanus (American lobster).